We begin with the raw amino-acid sequence, 389 residues long: Serpin B13 (389 aa).

The protein belongs to the serpin family. Ov-serpin subfamily.

Its subcellular location is the cytoplasm. In terms of biological role, may play a role in the proliferation or differentiation of keratinocytes. This is Serpin B13 (Serpinb13) from Mus musculus (Mouse).